The primary structure comprises 327 residues: ATP-dependent (S)-NAD(P)H-hydrate dehydratase (327 aa).

In terms of domain architecture, YjeF C-terminal spans 11 to 313 (LLTRVKRIIP…RHVGKAYNAL (303 aa)). Residues G121 and 174–180 (NVIEFKR) contribute to the (6S)-NADPHX site. ATP contacts are provided by residues 209–213 (KGQSD) and 228–237 (GGLKRCGGQG). A (6S)-NADPHX-binding site is contributed by D238.

Belongs to the NnrD/CARKD family. Mg(2+) serves as cofactor.

The protein localises to the cytoplasm. The catalysed reaction is (6S)-NADHX + ATP = ADP + phosphate + NADH + H(+). The enzyme catalyses (6S)-NADPHX + ATP = ADP + phosphate + NADPH + H(+). Catalyzes the dehydration of the S-form of NAD(P)HX at the expense of ATP, which is converted to ADP. Together with NAD(P)HX epimerase, which catalyzes the epimerization of the S- and R-forms, the enzyme allows the repair of both epimers of NAD(P)HX, a damaged form of NAD(P)H that is a result of enzymatic or heat-dependent hydration. This is ATP-dependent (S)-NAD(P)H-hydrate dehydratase from Schizosaccharomyces pombe (strain 972 / ATCC 24843) (Fission yeast).